The sequence spans 337 residues: Probable sulfurtransferase (337 aa).

Glycine 83 contacts ATP. Residues cysteine 172 and cysteine 175 each coordinate [4Fe-4S] cluster. The ATP site is built by lysine 179 and glycine 206. Cysteine 284 is a [4Fe-4S] cluster binding site.

It belongs to the TtcA family. Requires [4Fe-4S] cluster as cofactor. The cofactor is Mg(2+).

The polypeptide is Probable sulfurtransferase (Methanocaldococcus jannaschii (strain ATCC 43067 / DSM 2661 / JAL-1 / JCM 10045 / NBRC 100440) (Methanococcus jannaschii)).